A 331-amino-acid chain; its full sequence is Minor capsid protein A1 (331 aa).

Its subcellular location is the virion. Minor capsid protein. The sequence is that of Minor capsid protein A1 from Escherichia coli (Bacteriophage SP).